Consider the following 196-residue polypeptide: Aequorin-1 (196 aa).

A propeptide spanning residues 1–7 (MTSEQYS) is cleaved from the precursor. 4 EF-hand domains span residues 18 to 53 (KWIGRHKHMFNFLDVNHNGRISLDEMVYKASDIVIN), 54 to 108 (NLGA…SKNQ), 111 to 146 (LIRLWGDALFDIIDKDQNGAISLDEWKAYTKSDGII), and 147 to 182 (QSSEDCEETFRVCDIDESGQLDVDEMTRQHLGFWYT). Residues D31, N33, N35, R37, and E42 each coordinate Ca(2+). May interact with the chromophore stretches follow at residues 47–57 (ASDIVINNLGA), 62–72 (AKRHKDAVEAF), and 107–117 (NQITLIRLWGD). Residues D124, D126, N128, E135, D160, D162, S164, Q166, and E171 each contribute to the Ca(2+) site.

It belongs to the aequorin family. Post-translationally, the reduction of the disulfide bond is necessary to regenerate aequorin from apoaequorin.

Its function is as follows. Ca(2+)-dependent bioluminescence photoprotein. Displays an emission peak at 470 nm (blue light). Trace amounts of calcium ion trigger the intramolecular oxidation of the chromophore, coelenterazine into coelenteramide and CO(2) with the concomitant emission of light. In Aequorea victoria (Water jellyfish), this protein is Aequorin-1.